Consider the following 403-residue polypeptide: RNA-binding motif, single-stranded-interacting protein 1 (403 aa).

The disordered stretch occupies residues 30-56 (PAHPMAPPSPSTTSSNNNSSSSSNSGW). Low complexity predominate over residues 40-54 (STTSSNNNSSSSSNS). RRM domains are found at residues 62-135 (TNLY…MAKQ) and 141-226 (TNLY…FADG). Phosphothreonine is present on T208.

The protein resides in the nucleus. In terms of biological role, single-stranded DNA binding protein that interacts with the region upstream of the C-myc gene. Binds specifically to the DNA sequence motif 5'-[AT]CT[AT][AT]T-3'. Probably has a role in DNA replication. This is RNA-binding motif, single-stranded-interacting protein 1 (RBMS1) from Bos taurus (Bovine).